A 403-amino-acid chain; its full sequence is Na(+)/H(+) antiporter NhaA (403 aa).

12 helical membrane-spanning segments follow: residues 25–45 (IAGL…NSPF), 70–90 (LILW…GLEI), 105–125 (IALP…IFLA), 136–156 (GWAV…AMLG), 165–185 (VFLT…IALA), 188–208 (EGLS…LIVL), 213–233 (VASL…VLES), 234–254 (GVHS…RVSG), 269–289 (VALL…LGGV), 302–322 (IILG…GLAV), 340–360 (GAAL…GLAF), and 369–389 (VNLA…VVLA).

Belongs to the NhaA Na(+)/H(+) (TC 2.A.33) antiporter family.

Its subcellular location is the cell inner membrane. It carries out the reaction Na(+)(in) + 2 H(+)(out) = Na(+)(out) + 2 H(+)(in). Na(+)/H(+) antiporter that extrudes sodium in exchange for external protons. This chain is Na(+)/H(+) antiporter NhaA, found in Maricaulis maris (strain MCS10) (Caulobacter maris).